Here is a 114-residue protein sequence, read N- to C-terminus: Large ribosomal subunit protein bL19 (114 aa).

It belongs to the bacterial ribosomal protein bL19 family.

Functionally, this protein is located at the 30S-50S ribosomal subunit interface and may play a role in the structure and function of the aminoacyl-tRNA binding site. The protein is Large ribosomal subunit protein bL19 of Listeria welshimeri serovar 6b (strain ATCC 35897 / DSM 20650 / CCUG 15529 / CIP 8149 / NCTC 11857 / SLCC 5334 / V8).